We begin with the raw amino-acid sequence, 75 residues long: Small ribosomal subunit protein bS16 (75 aa).

It belongs to the bacterial ribosomal protein bS16 family.

In Nitratiruptor sp. (strain SB155-2), this protein is Small ribosomal subunit protein bS16.